Reading from the N-terminus, the 430-residue chain is UDP-glucose 6-dehydrogenase AglM (430 aa).

Cys269 is an active-site residue.

It belongs to the UDP-glucose/GDP-mannose dehydrogenase family.

It catalyses the reaction UDP-alpha-D-glucose + 2 NAD(+) + H2O = UDP-alpha-D-glucuronate + 2 NADH + 3 H(+). It functions in the pathway nucleotide-sugar biosynthesis; UDP-alpha-D-glucuronate biosynthesis; UDP-alpha-D-glucuronate from UDP-alpha-D-glucose: step 1/1. Its pathway is cell surface structure biogenesis; S-layer biogenesis. Activity improves as salinity decreases. Its function is as follows. Involved in the assembly of a N-linked pentasaccharide that decorates the S-layer glycoprotein and flagellins. Involved in the biosynthesis of the hexuronic acids found at both positions 2 and 3 of the pentasaccharide. The polypeptide is UDP-glucose 6-dehydrogenase AglM (aglM) (Haloferax volcanii (strain ATCC 29605 / DSM 3757 / JCM 8879 / NBRC 14742 / NCIMB 2012 / VKM B-1768 / DS2) (Halobacterium volcanii)).